The following is a 619-amino-acid chain: Auxin efflux carrier component 7 (619 aa).

Residues 1–7 (MITWHDL) are Extracellular-facing. The helical transmembrane segment at 8 to 28 (YTVLTAVIPLYVAMILAYGSV) threads the bilayer. At 29–38 (RWWKIFSPDQ) the chain is on the cytoplasmic side. Residues 39 to 59 (CSGINRFVAIFAVPLLSFHFI) traverse the membrane as a helical segment. Residue valine 51 participates in (indol-3-yl)acetate binding. The Extracellular portion of the chain corresponds to 60 to 71 (SSNNPYAMNLRF). A helical membrane pass occupies residues 72–92 (IAADTLQKLIMLTLLIIWANF). The Cytoplasmic segment spans residues 93–101 (TRSGSLEWS). The chain crosses the membrane as a helical span at residues 102–122 (ITIFSLSTLPNTLVMGIPLLI). Asparagine 112 and leucine 114 together coordinate (indol-3-yl)acetate. Over 123–131 (AMYGEYSGS) the chain is Extracellular. Residues 132-152 (LMVQIVVLQCIIWYTLLLFLF) traverse the membrane as a helical segment. Tyrosine 145 contributes to the (indol-3-yl)acetate binding site. Topologically, residues 153–479 (EYRGAKILIM…LIRNPNTYSS (327 aa)) are cytoplasmic. Phosphoserine occurs at positions 229, 246, and 286. Residues 306 to 340 (GAPGSYPAPNPEFSTGNKTGSKAPKENHHHVGKSN) are disordered. Threonine 320 is subject to Phosphothreonine. The residue at position 357 (serine 357) is a Phosphoserine. The segment at 393-413 (HTQNGENKAGPMNGDYGGEEE) is disordered. Residues 480–500 (LIGLIWALVAFRWDVAMPKII) form a helical membrane-spanning segment. Residues 501–503 (QQS) are Extracellular-facing. The chain crosses the membrane as a helical span at residues 504–524 (ISILSDAGLGMAMFSLGLFMA). Topologically, residues 525–538 (LQPKLIACGNSTAT) are cytoplasmic. Residues 539 to 559 (FAMAVRFFTGPAVMAVAAMAI) traverse the membrane as a helical segment. The Extracellular segment spans residues 560-564 (GLRGD). Residues 565–585 (LLRVAIVQAALPQGIVPFVFA) traverse the membrane as a helical segment. (indol-3-yl)acetate is bound by residues isoleucine 579 and valine 580. The Cytoplasmic portion of the chain corresponds to 586–598 (KEYNVHPAILSTG). The helical transmembrane segment at 599-619 (VIFGMLIALPITLVYYILLGL) threads the bilayer.

Belongs to the auxin efflux carrier (TC 2.A.69.1) family. Homodimer.

It localises to the cell membrane. In terms of biological role, acts as a component of the auxin efflux carrier. Mediates the initial auxin gradient which contributes to the establishment of the apical-basal axis in early embryogenesis. Together with PIN3 and PIN4, involved in the connective auxin transport (CAT) that ensures communication across the shoot system, and modulates strigolactone-mediated shoot branching control. The abcb19 pin3 pin4 pin7 quadruple mutant exhibits an additive phenotype on strigolactone-mediated bud outgrowth responses and shoot branching control. In Arabidopsis thaliana (Mouse-ear cress), this protein is Auxin efflux carrier component 7.